The following is a 430-amino-acid chain: MELAYMAKLPKEEFEERRTRVFAQMQPNSALLLFSEIEKRRNNDCTYPFRQDSYFWYLTGFNEPNAALLLLKTEQVEKAIIFLRPRDPLLETWNGRRLGVERAPQQLNVNEAYSIEEFATVLPKILKNLTALYHVPEIHTWGDTLVSESAVNFSEILDWRPMLSEMRLIKSPNEIRLMQQAGQITALGHIKAMQTTRPNRFEYEIESDILHEFNRHCARFPSYNSIVAGGSNACILHYTENDRPLNDGDLVLIDAGCEFAMYAGDITRTFPVNGKFSQPQREIYELVLKAQKRAIELLVPGNSIKQANDEVIRIKTQGLVDLGILKGDVDTLIEQQAYRQFYMHGLGHWLGLDVHDVGSYGQDKQRILEIGMVITVEPGIYISEDADVPEQYKGIGVRIEDNLLMTEYGNKILTAAVPKEIADIENLMNF.

Mn(2+) is bound by residues Asp-254, Asp-265, His-348, Glu-377, and Glu-400.

It belongs to the peptidase M24B family. As to quaternary structure, homotetramer. Mn(2+) is required as a cofactor.

The enzyme catalyses Release of any N-terminal amino acid, including proline, that is linked to proline, even from a dipeptide or tripeptide.. The protein is Xaa-Pro aminopeptidase (pepP) of Haemophilus influenzae (strain ATCC 51907 / DSM 11121 / KW20 / Rd).